The chain runs to 231 residues: Orotidine 5'-phosphate decarboxylase (231 aa).

Substrate is bound by residues Asp-11, Lys-34, 61 to 70 (DLKLHDIPNT), Thr-117, Arg-179, Gln-188, Gly-208, and Arg-209. Catalysis depends on Lys-63, which acts as the Proton donor.

It belongs to the OMP decarboxylase family. Type 1 subfamily. Homodimer.

It carries out the reaction orotidine 5'-phosphate + H(+) = UMP + CO2. The protein operates within pyrimidine metabolism; UMP biosynthesis via de novo pathway; UMP from orotate: step 2/2. Catalyzes the decarboxylation of orotidine 5'-monophosphate (OMP) to uridine 5'-monophosphate (UMP). This Streptococcus thermophilus (strain ATCC BAA-491 / LMD-9) protein is Orotidine 5'-phosphate decarboxylase.